The primary structure comprises 58 residues: Small ribosomal subunit protein bS21A (58 aa).

The segment at 38–58 (YEKPSLRRKRKAEAARKGGRN) is disordered. The segment covering 49–58 (AEAARKGGRN) has biased composition (basic and acidic residues).

It belongs to the bacterial ribosomal protein bS21 family.

The protein is Small ribosomal subunit protein bS21A of Trichormus variabilis (strain ATCC 29413 / PCC 7937) (Anabaena variabilis).